Consider the following 146-residue polypeptide: Hemoglobin subunit beta-1 (146 aa).

A Globin domain is found at H2–H146. Residue H92 participates in heme b binding.

Belongs to the globin family. Heterotetramer of two alpha chains and two beta chains. As to expression, red blood cells.

Its function is as follows. Involved in oxygen transport from the lung to the various peripheral tissues. This is Hemoglobin subunit beta-1 from Saara hardwickii (Indian spiny-tailed lizard).